Here is a 219-residue protein sequence, read N- to C-terminus: Outer membrane virulence protein YopE (219 aa).

A disordered region spans residues 1 to 37; the sequence is MKISSFISTSLPLPTSVSGSSSVGEMSGRSVSQQTSD. The span at 8–32 shows a compositional bias: low complexity; the sequence is STSLPLPTSVSGSSSVGEMSGRSVS. The Bacterial Rho-GAP domain maps to 101 to 219; that stretch reads SFSDSIKQLA…QQMQKLLSLM (119 aa).

This sequence belongs to the YopE family.

It localises to the cell outer membrane. Essential virulence determinant; cytotoxic effector, involved in resistance to phagocytosis. In Yersinia pestis, this protein is Outer membrane virulence protein YopE (yopE).